We begin with the raw amino-acid sequence, 286 residues long: Non-homologous end joining protein Ku (286 aa).

The 166-residue stretch at 10–175 (TVGLVSFPVR…EEVREPDFVV (166 aa)) folds into the Ku domain. Positions 226–242 (ERQERQRREAGEVRQAD) are enriched in basic and acidic residues. The interval 226–270 (ERQERQRREAGEVRQADETDEAAETEVPEVDIPASRAPGETGGEL) is disordered. Over residues 243 to 254 (ETDEAAETEVPE) the composition is skewed to acidic residues.

Belongs to the prokaryotic Ku family. As to quaternary structure, homodimer. Interacts with LigD.

Functionally, with LigD forms a non-homologous end joining (NHEJ) DNA repair enzyme, which repairs dsDNA breaks with reduced fidelity. Binds linear dsDNA with 5'- and 3'- overhangs but not closed circular dsDNA nor ssDNA. Recruits and stimulates the ligase activity of LigD. This chain is Non-homologous end joining protein Ku, found in Actinosynnema mirum (strain ATCC 29888 / DSM 43827 / JCM 3225 / NBRC 14064 / NCIMB 13271 / NRRL B-12336 / IMRU 3971 / 101).